The sequence spans 347 residues: Anthranilate phosphoribosyltransferase (347 aa).

Residues glycine 88, 91-92 (GD), threonine 96, 98-101 (NIST), 116-124 (KHGNRSVSS), and serine 128 contribute to the 5-phospho-alpha-D-ribose 1-diphosphate site. Anthranilate is bound at residue glycine 88. A Mg(2+)-binding site is contributed by serine 100. Asparagine 119 is an anthranilate binding site. Residue arginine 174 participates in anthranilate binding. Aspartate 232 and glutamate 233 together coordinate Mg(2+).

It belongs to the anthranilate phosphoribosyltransferase family. In terms of assembly, homodimer. The cofactor is Mg(2+).

The enzyme catalyses N-(5-phospho-beta-D-ribosyl)anthranilate + diphosphate = 5-phospho-alpha-D-ribose 1-diphosphate + anthranilate. Its pathway is amino-acid biosynthesis; L-tryptophan biosynthesis; L-tryptophan from chorismate: step 2/5. Its function is as follows. Catalyzes the transfer of the phosphoribosyl group of 5-phosphorylribose-1-pyrophosphate (PRPP) to anthranilate to yield N-(5'-phosphoribosyl)-anthranilate (PRA). This Shewanella sp. (strain MR-7) protein is Anthranilate phosphoribosyltransferase.